The primary structure comprises 509 residues: Ribonuclease E/G-like protein (509 aa).

Residues 35–117 (SDIYLGCVDK…LTANITLSGR (83 aa)) enclose the S1 motif domain. Positions 296 and 339 each coordinate Mg(2+).

This sequence belongs to the RNase E/G family. Mg(2+) is required as a cofactor.

The protein resides in the plastid. Its subcellular location is the chloroplast stroma. Functionally, involved in intercistronic processing of primary transcripts from chloroplast operons. The endonucleolytic activity of the enzyme depends on the number of phosphates at the 5' end, is inhibited by structured RNA, and preferentially cleaves A/U-rich sequences. The protein is Ribonuclease E/G-like protein (rne) of Pyropia yezoensis (Susabi-nori).